Reading from the N-terminus, the 452-residue chain is Phosphoglucosamine mutase (452 aa).

The active-site Phosphoserine intermediate is Ser-97. Mg(2+)-binding residues include Ser-97, Asp-236, Asp-238, and Asp-240. Ser-97 carries the post-translational modification Phosphoserine.

The protein belongs to the phosphohexose mutase family. Mg(2+) is required as a cofactor. In terms of processing, activated by phosphorylation.

The catalysed reaction is alpha-D-glucosamine 1-phosphate = D-glucosamine 6-phosphate. In terms of biological role, catalyzes the conversion of glucosamine-6-phosphate to glucosamine-1-phosphate. This Prochlorococcus marinus subsp. pastoris (strain CCMP1986 / NIES-2087 / MED4) protein is Phosphoglucosamine mutase.